The sequence spans 189 residues: Ribose 1,5-bisphosphate phosphokinase PhnN (189 aa).

ATP is bound at residue 10–17 (GPSGSGKD).

It belongs to the ribose 1,5-bisphosphokinase family.

It catalyses the reaction alpha-D-ribose 1,5-bisphosphate + ATP = 5-phospho-alpha-D-ribose 1-diphosphate + ADP. It functions in the pathway metabolic intermediate biosynthesis; 5-phospho-alpha-D-ribose 1-diphosphate biosynthesis; 5-phospho-alpha-D-ribose 1-diphosphate from D-ribose 5-phosphate (route II): step 3/3. Catalyzes the phosphorylation of ribose 1,5-bisphosphate to 5-phospho-D-ribosyl alpha-1-diphosphate (PRPP). In Enterobacter lignolyticus (strain SCF1), this protein is Ribose 1,5-bisphosphate phosphokinase PhnN.